Here is a 3165-residue protein sequence, read N- to C-terminus: Protein eyes shut homolog (3165 aa).

An N-terminal signal peptide occupies residues 1–21; it reads MTDKSIIILSLMVFHSSFING. Residues asparagine 42, asparagine 105, asparagine 117, and asparagine 166 are each glycosylated (N-linked (GlcNAc...) asparagine). 3 EGF-like domains span residues 170-212, 213-254, and 256-292; these read KQQF…KYCQ, ELDA…KNCS, and IIVQ…PFCE. Disulfide bonds link cysteine 174–cysteine 189, cysteine 183–cysteine 200, cysteine 202–cysteine 211, cysteine 217–cysteine 228, cysteine 222–cysteine 242, cysteine 244–cysteine 253, cysteine 260–cysteine 270, cysteine 265–cysteine 280, and cysteine 282–cysteine 291. Residues asparagine 252, asparagine 269, and asparagine 272 are each glycosylated (N-linked (GlcNAc...) asparagine). 2 N-linked (GlcNAc...) asparagine glycosylation sites follow: asparagine 311 and asparagine 343. 2 EGF-like domains span residues 332-368 and 370-406; these read DVSE…LLCK and FQTS…KNCE. 2 disulfides stabilise this stretch: cysteine 341-cysteine 356 and cysteine 358-cysteine 367. N-linked (GlcNAc...) asparagine glycosylation is present at asparagine 382. Cysteines 396 and 405 form a disulfide. Asparagine 506, asparagine 520, asparagine 521, asparagine 566, and asparagine 573 each carry an N-linked (GlcNAc...) asparagine glycan. EGF-like domains are found at residues 566-602, 604-641, and 643-679; these read NITD…RLCV, NVDY…NICE, and DIED…TRCE. Intrachain disulfides connect cysteine 592/cysteine 601 and cysteine 608/cysteine 620. 2 N-linked (GlcNAc...) asparagine glycosylation sites follow: asparagine 611 and asparagine 628. An intrachain disulfide couples cysteine 629 to cysteine 640. The N-linked (GlcNAc...) asparagine glycan is linked to asparagine 654. 4 disulfide bridges follow: cysteine 669–cysteine 678, cysteine 685–cysteine 696, cysteine 690–cysteine 705, and cysteine 707–cysteine 719. Residues 681–720 enclose the EGF-like 9; calcium-binding domain; the sequence is DLDECALHPCKSGATCIDQPGNYFCQCGPPFKVVDGFSCL. One can recognise an EGF-like 10 domain in the interval 733 to 769; sequence NIDNCILNAFEHNSTYKDLHLSYQCVCLSGWEGNFCE. N-linked (GlcNAc...) asparagine glycosylation occurs at asparagine 745. 34 disulfides stabilise this stretch: cysteine 759/cysteine 768, cysteine 775/cysteine 786, cysteine 780/cysteine 795, cysteine 797/cysteine 806, cysteine 813/cysteine 824, cysteine 818/cysteine 835, cysteine 837/cysteine 846, cysteine 853/cysteine 866, cysteine 860/cysteine 876, cysteine 878/cysteine 887, cysteine 894/cysteine 905, cysteine 899/cysteine 914, cysteine 916/cysteine 925, cysteine 932/cysteine 943, cysteine 937/cysteine 952, cysteine 954/cysteine 963, cysteine 970/cysteine 981, cysteine 975/cysteine 990, cysteine 992/cysteine 1001, cysteine 1008/cysteine 1019, cysteine 1013/cysteine 1028, cysteine 1030/cysteine 1039, cysteine 1046/cysteine 1056, cysteine 1051/cysteine 1065, cysteine 1067/cysteine 1076, cysteine 1083/cysteine 1094, cysteine 1088/cysteine 1103, cysteine 1105/cysteine 1114, cysteine 1121/cysteine 1137, cysteine 1131/cysteine 1147, cysteine 1149/cysteine 1158, cysteine 1165/cysteine 1176, cysteine 1170/cysteine 1185, and cysteine 1187/cysteine 1196. The EGF-like 11; calcium-binding domain occupies 771–807; it reads ESNECKMNPCKNNSTCTDLYKSYRCECTSGWTGQNCS. N-linked (GlcNAc...) asparagine glycosylation is found at asparagine 782, asparagine 783, and asparagine 805. 3 EGF-like domains span residues 809 to 847, 849 to 888, and 890 to 926; these read EINE…QFCH, RYNP…KHCE, and DVKE…SLCE. Residues asparagine 862 and asparagine 863 are each glycosylated (N-linked (GlcNAc...) asparagine). The region spanning 928–964 is the EGF-like 15; calcium-binding domain; it reads EINECSSEPCKNNGTCVDLTNRFFCNCEPGYHGPFCE. A glycan (N-linked (GlcNAc...) asparagine) is linked at asparagine 940. The EGF-like 16 domain maps to 966–1002; the sequence is EVNKCKISPCLDEENCVYRTDRYNCLCAPGYTGINCE. The EGF-like 17; calcium-binding domain occupies 1004–1040; sequence NLDECLSEPCLHDGVCIDGINHYTCDCKSGFFGTHCE. EGF-like domains lie at 1042–1077, 1079–1115, and 1117–1159; these read NAND…IQCK, KIND…AYCE, and SIDN…QFCE. The EGF-like 21; calcium-binding domain occupies 1161-1197; the sequence is NINECSSSPCLHGANCEDHINGYVCKCQPGWSGHHCE. Asparagine 1509, asparagine 1906, asparagine 1941, and asparagine 2033 each carry an N-linked (GlcNAc...) asparagine glycan. A Laminin G-like 1 domain is found at 1883–2063; the sequence is FSCVCYYGDS…AVRNYHINNC (181 aa). 4 disulfides stabilise this stretch: cysteine 2037-cysteine 2063, cysteine 2103-cysteine 2114, cysteine 2108-cysteine 2128, and cysteine 2130-cysteine 2139. Positions 2099-2140 constitute an EGF-like 22 domain; it reads APSVCQEDVCHNGGTCRPIFLSSGIVSFQCDCPLHFTGRFCE. The region spanning 2145 to 2339 is the Laminin G-like 2 domain; sequence LFFPSFSGNS…NIENCHVPWC (195 aa). Residues asparagine 2170, asparagine 2185, and asparagine 2228 are each glycosylated (N-linked (GlcNAc...) asparagine). 6 disulfide bridges follow: cysteine 2308–cysteine 2339, cysteine 2339–cysteine 2350, cysteine 2344–cysteine 2359, cysteine 2375–cysteine 2386, cysteine 2380–cysteine 2396, and cysteine 2398–cysteine 2407. EGF-like domains follow at residues 2335–2368 and 2371–2408; these read HVPW…YSGK and QFAS…PLCT. N-linked (GlcNAc...) asparagine glycosylation is present at asparagine 2347. Residues asparagine 2412, asparagine 2453, asparagine 2484, asparagine 2506, and asparagine 2532 are each glycosylated (N-linked (GlcNAc...) asparagine). Positions 2419-2609 constitute a Laminin G-like 3 domain; the sequence is SGTDAFGYTS…PNAGRSVGQC (191 aa). 3 disulfides stabilise this stretch: cysteine 2576–cysteine 2609, cysteine 2614–cysteine 2625, and cysteine 2619–cysteine 2634. 2 consecutive EGF-like domains span residues 2610–2646 and 2648–2689; these read HASP…AFCT and TVSI…IYCE. A glycan (N-linked (GlcNAc...) asparagine) is linked at asparagine 2635. 4 disulfide bridges follow: cysteine 2636/cysteine 2645, cysteine 2652/cysteine 2668, cysteine 2662/cysteine 2677, and cysteine 2679/cysteine 2688. The 179-residue stretch at 2717–2895 folds into the Laminin G-like 4 domain; that stretch reads DPSFRSSELS…AKGGSNVGDC (179 aa). N-linked (GlcNAc...) asparagine glycosylation is found at asparagine 2775, asparagine 2800, and asparagine 2824. Cystine bridges form between cysteine 2868-cysteine 2895, cysteine 2900-cysteine 2911, cysteine 2905-cysteine 2920, and cysteine 2922-cysteine 2931. 2 EGF-like domains span residues 2896 to 2932 and 2933 to 2970; these read DGTA…NICN and QSAY…RYCE. Residue asparagine 2914 is glycosylated (N-linked (GlcNAc...) asparagine). An N-linked (GlcNAc...) asparagine glycan is attached at asparagine 2932. 3 cysteine pairs are disulfide-bonded: cysteine 2937–cysteine 2948, cysteine 2942–cysteine 2958, and cysteine 2960–cysteine 2969. Asparagine 2971, asparagine 3006, asparagine 3036, asparagine 3057, asparagine 3073, and asparagine 3082 each carry an N-linked (GlcNAc...) asparagine glycan. Positions 2975 to 3165 constitute a Laminin G-like 5 domain; sequence FTTAKFMGNS…YDGDEQNEVT (191 aa).

This sequence belongs to the EYS family. In terms of tissue distribution, expressed in retina (at protein level).

It localises to the cell projection. Its subcellular location is the cilium. It is found in the photoreceptor outer segment. The protein resides in the cytoplasm. The protein localises to the cytoskeleton. It localises to the cilium axoneme. Its subcellular location is the microtubule organizing center. It is found in the centrosome. The protein resides in the secreted. The protein localises to the extracellular space. It localises to the extracellular matrix. Its subcellular location is the interphotoreceptor matrix. Functionally, required to maintain the integrity of photoreceptor cells. Specifically required for normal morphology of the photoreceptor ciliary pocket, and might thus facilitate protein trafficking between the photoreceptor inner and outer segments via the transition zone. This chain is Protein eyes shut homolog, found in Macaca fascicularis (Crab-eating macaque).